Consider the following 149-residue polypeptide: 3-dehydroquinate dehydratase (149 aa).

Y24 functions as the Proton acceptor in the catalytic mechanism. Residues N75, H81, and D88 each contribute to the substrate site. H101 functions as the Proton donor in the catalytic mechanism. Residues 102–103 (IS) and R112 contribute to the substrate site.

Belongs to the type-II 3-dehydroquinase family. In terms of assembly, homododecamer.

It catalyses the reaction 3-dehydroquinate = 3-dehydroshikimate + H2O. It participates in metabolic intermediate biosynthesis; chorismate biosynthesis; chorismate from D-erythrose 4-phosphate and phosphoenolpyruvate: step 3/7. Its function is as follows. Catalyzes a trans-dehydration via an enolate intermediate. In Methylobacterium radiotolerans (strain ATCC 27329 / DSM 1819 / JCM 2831 / NBRC 15690 / NCIMB 10815 / 0-1), this protein is 3-dehydroquinate dehydratase.